The chain runs to 256 residues: Thiazole synthase (256 aa).

The active-site Schiff-base intermediate with DXP is the Lys95. 1-deoxy-D-xylulose 5-phosphate is bound by residues Gly156, 182 to 183, and 204 to 205; these read AG and NT.

This sequence belongs to the ThiG family. Homotetramer. Forms heterodimers with either ThiH or ThiS.

The protein resides in the cytoplasm. The enzyme catalyses [ThiS sulfur-carrier protein]-C-terminal-Gly-aminoethanethioate + 2-iminoacetate + 1-deoxy-D-xylulose 5-phosphate = [ThiS sulfur-carrier protein]-C-terminal Gly-Gly + 2-[(2R,5Z)-2-carboxy-4-methylthiazol-5(2H)-ylidene]ethyl phosphate + 2 H2O + H(+). It participates in cofactor biosynthesis; thiamine diphosphate biosynthesis. Catalyzes the rearrangement of 1-deoxy-D-xylulose 5-phosphate (DXP) to produce the thiazole phosphate moiety of thiamine. Sulfur is provided by the thiocarboxylate moiety of the carrier protein ThiS. In vitro, sulfur can be provided by H(2)S. This chain is Thiazole synthase, found in Escherichia coli (strain 55989 / EAEC).